The chain runs to 370 residues: Mitogen-activated protein kinase 3 (370 aa).

The region spanning 38-324 (RPPIIPIGRG…VEQALNHQYL (287 aa)) is the Protein kinase domain. ATP contacts are provided by residues 44–52 (IGRGAYGIV) and lysine 67. The Proton acceptor role is filled by aspartate 164. Threonine 196 is modified (phosphothreonine). Residues 196–198 (TEY) carry the TXY motif. Residue tyrosine 198 is modified to Phosphotyrosine. Phosphothreonine is present on threonine 201.

Belongs to the protein kinase superfamily. CMGC Ser/Thr protein kinase family. MAP kinase subfamily. In terms of assembly, interacts with DSPTP1B/MKP2, NDPK2 and VIP1. The interaction with DSPTP1B/MKP2 is repressed by fungal elicitation. Binds to LIP5. Interacts with VQ4. Interacts with RACK1A, RACK1B and RACK1C. Interacts with FLZ9. Interacts with MKK5. Post-translationally, dually phosphorylated on Thr-196 and Tyr-198, which activates the enzyme. Dephosphorylated by DSPTP1B/MKP2.

It is found in the cytoplasm. The protein resides in the nucleus. It localises to the cell cortex. It carries out the reaction L-seryl-[protein] + ATP = O-phospho-L-seryl-[protein] + ADP + H(+). The catalysed reaction is L-threonyl-[protein] + ATP = O-phospho-L-threonyl-[protein] + ADP + H(+). Its activity is regulated as follows. Activated by threonine and tyrosine phosphorylation. Activated by MAP kinase kinases MKK4, MKK5, MKK7 and MKK9. Activated in response to hydrogen peroxide, ozone, salt stress and flagellin bacterial elicitor. Triggered by Agrobacterium upon T-DNA transfer. Repressed by DSPTP1B/MKP2-mediated dephosphorylation. Functionally, involved in oxidative stress-mediated signaling cascade (such as ozone). Involved in the innate immune MAP kinase signaling cascade (MEKK1, MKK4/MKK5 and MPK3/MPK6) downstream of bacterial flagellin receptor FLS2. May be involved in hypersensitive response (HR)-mediated signaling cascade by modulating LIP5 phosphorylation and subsequent multivesicular bodies (MVBs) trafficking. May phosphorylate regulators of WRKY transcription factors. Mediates the phosphorylation of VIP1 and subsequent stress genes transcription in response to Agrobacterium. MKK9-MPK3/MPK6 module phosphorylates and activates EIN3, leading to the promotion of EIN3-mediated transcription in ethylene signaling. MPK3/MPK6 cascade regulates camalexin synthesis through transcriptional regulation of the biosynthetic genes after pathogen infection. YDA-MKK4/MKK5-MPK3/MPK6 module regulates stomatal cell fate before the guard mother cell (GMC) is specified. When activated, reinforces the feedback loop by phosphorylating BASL, and inhibits stomatal fate by phosphorylating SPCH. This MAPK cascade also functions downstream of the ER receptor in regulating coordinated local cell proliferation, which shapes the morphology of plant organs. The protein is Mitogen-activated protein kinase 3 of Arabidopsis thaliana (Mouse-ear cress).